The primary structure comprises 745 residues: Copper-transporting ATPase (745 aa).

In terms of domain architecture, HMA spans 1–67; sequence MKESFYIEGM…LIEKLGYSPK (67 aa). At 1–83 the chain is on the cytoplasmic side; it reads MKESFYIEGM…KKEFFSPNVK (83 aa). Cu cation contacts are provided by Cys-12 and Cys-15. Residues 84–104 traverse the membrane as a helical segment; that stretch reads LALAVIFTLFVVYLSMGAMLS. Over 105–124 the chain is Extracellular; the sequence is PSLLPESLLAIDNHSNFLNA. The chain crosses the membrane as a helical span at residues 125-144; sequence CLQLIGALIVMHLGRDFYIQ. Residues 145-151 are Cytoplasmic-facing; it reads GFKALWH. Residues 152–172 form a helical membrane-spanning segment; sequence RQPNMSSLIAIGTSAALISSL. At 173-194 the chain is on the extracellular side; sequence WQLYLVYTNHYTDQWSYGHYYF. A helical transmembrane segment spans residues 195–215; that stretch reads ESVCVILMFVMVGKRIENVSK. Topologically, residues 216 to 343 are cytoplasmic; it reads DKALDAMQAL…KAEISRLADK (128 aa). A helical membrane pass occupies residues 344–366; that stretch reads VSSVFVPSVIAISILAFVVWLII. At 367 to 379 the chain is on the extracellular side; it reads APKPDFWWNFGIA. The helical transmembrane segment at 380–397 threads the bilayer; the sequence is LEVFVSVLVISCPCALGL. Residues 398–685 lie on the Cytoplasmic side of the membrane; that stretch reads ATPMSILVAN…KLSQATIKNI (288 aa). The active-site 4-aspartylphosphate intermediate is the Asp-435. Positions 631 and 635 each coordinate Mg(2+). The chain crosses the membrane as a helical span at residues 686–705; sequence KENLFWAFCYNSVFIPLACG. Residues 706-716 are Extracellular-facing; that stretch reads VLYKANLMLSP. Residues 717-735 traverse the membrane as a helical segment; it reads AIAGLAMSLSSVSVVLNSQ. Over 736-745 the chain is Cytoplasmic; it reads RLRNFKIKDH.

It belongs to the cation transport ATPase (P-type) (TC 3.A.3) family. Type IB subfamily.

It is found in the cell membrane. It carries out the reaction Cu(2+)(in) + ATP + H2O = Cu(2+)(out) + ADP + phosphate + H(+). Its function is as follows. Probably involved in copper export. The sequence is that of Copper-transporting ATPase (copA) from Helicobacter pylori (strain ATCC 700392 / 26695) (Campylobacter pylori).